The sequence spans 99 residues: Large ribosomal subunit protein uL23 (99 aa).

It belongs to the universal ribosomal protein uL23 family. As to quaternary structure, part of the 50S ribosomal subunit. Contacts protein L29, and trigger factor when it is bound to the ribosome.

In terms of biological role, one of the early assembly proteins it binds 23S rRNA. One of the proteins that surrounds the polypeptide exit tunnel on the outside of the ribosome. Forms the main docking site for trigger factor binding to the ribosome. The sequence is that of Large ribosomal subunit protein uL23 from Rhodopseudomonas palustris (strain HaA2).